Consider the following 242-residue polypeptide: MEVKQISESTIKITIKLEDLEEHGMEMADFLVPQEKTEEFFYTILDELEMPESFLDSGMLSFRVTPKPDKLDVFVTKSKVDKNLNFEDLADLPDMDELSQMTPDEFLKTLEKNIFEKSRDDIDAVQMLEKAEEEDTSEPEEGQEQDRYIYYILRFSDLKNLIAFTKTVDYPVDTSELYKMDQRYYLTILVDIEGRPSRYPAWLLAAMREHAEDTDTTRALLQEHGHLLIVTDAVQHLQKVNC.

The protein belongs to the MecA family. As to quaternary structure, homodimer.

Its function is as follows. Enables the recognition and targeting of unfolded and aggregated proteins to the ClpC protease or to other proteins involved in proteolysis. The protein is Adapter protein MecA of Streptococcus gordonii (strain Challis / ATCC 35105 / BCRC 15272 / CH1 / DL1 / V288).